A 634-amino-acid polypeptide reads, in one-letter code: Chaperone protein HtpG (634 aa).

Residues 1-345 (MEHQQNHTFS…SNDLPLNVSR (345 aa)) are a; substrate-binding. Positions 346-562 (EILQDTRVTA…NDDMSTQMAK (217 aa)) are b. The interval 563–634 (LMAQMGQPVP…VGRINKLLLA (72 aa)) is c.

Belongs to the heat shock protein 90 family. As to quaternary structure, homodimer.

The protein resides in the cytoplasm. Molecular chaperone. Has ATPase activity. This chain is Chaperone protein HtpG, found in Psychromonas ingrahamii (strain DSM 17664 / CCUG 51855 / 37).